Reading from the N-terminus, the 156-residue chain is FAD synthase (156 aa).

ATP is bound by residues 16–17 (TF), 21–24 (HPGH), Asp101, and Tyr129.

It belongs to the archaeal FAD synthase family. Homodimer. The cofactor is a divalent metal cation.

The enzyme catalyses FMN + ATP + H(+) = FAD + diphosphate. It participates in cofactor biosynthesis; FAD biosynthesis; FAD from FMN: step 1/1. In terms of biological role, catalyzes the transfer of the AMP portion of ATP to flavin mononucleotide (FMN) to produce flavin adenine dinucleotide (FAD) coenzyme. This chain is FAD synthase, found in Methanococcus aeolicus (strain ATCC BAA-1280 / DSM 17508 / OCM 812 / Nankai-3).